We begin with the raw amino-acid sequence, 57 residues long: DNA gyrase inhibitor YacG (57 aa).

Zn(2+) contacts are provided by C5, C8, C20, and C24.

Belongs to the DNA gyrase inhibitor YacG family. In terms of assembly, interacts with GyrB. Requires Zn(2+) as cofactor.

Functionally, inhibits all the catalytic activities of DNA gyrase by preventing its interaction with DNA. Acts by binding directly to the C-terminal domain of GyrB, which probably disrupts DNA binding by the gyrase. In Caulobacter vibrioides (strain ATCC 19089 / CIP 103742 / CB 15) (Caulobacter crescentus), this protein is DNA gyrase inhibitor YacG.